The chain runs to 97 residues: F-actin-capping protein subunit beta (97 aa).

Disordered stretches follow at residues Arg-1–Ser-27 and Lys-43–Ser-66. Positions Lys-43–Arg-57 are enriched in polar residues. Lys-97 carries the post-translational modification N6-acetyllysine.

The protein belongs to the F-actin-capping protein beta subunit family. In terms of assembly, component of the F-actin capping complex, composed of a heterodimer of an alpha and a beta subunit. Subunit of dynactin, a multiprotein complex part of a tripartite complex with dynein and a adapter, such as BICDL1, BICD2 or HOOK3. The dynactin complex is built around ACTR1A/ACTB filament and consists of an actin-related filament composed of a shoulder domain, a pointed end and a barbed end. Its length is defined by its flexible shoulder domain. The soulder is composed of 2 DCTN1 subunits, 4 DCTN2 and 2 DCTN3. The 4 DCNT2 (via N-terminus) bind the ACTR1A filament and act as molecular rulers to determine the length. The pointed end is important for binding dynein-dynactin cargo adapters. Consists of 4 subunits: ACTR10, DCNT4, DCTN5 and DCTN6. The barbed end is composed of a CAPZA1:CAPZB heterodimers, which binds ACTR1A/ACTB filament and dynactin and stabilizes dynactin. Interacts with ARHGAP17. Interaction with RCSD1/CAPZIP. Component of the WASH complex, composed of F-actin-capping protein subunit alpha (CAPZA1, CAPZA2 or CAPZA3), F-actin-capping protein subunit beta (CAPZB), WASH (WASHC1, WASH2P, WASH3P, WASH4P, WASH5P or WASH6P), WASHC2 (WASHC2A or WASHC2C), WASHC3, WASHC4 and WASHC5. Interacts with ACTG1. Directly interacts with CRACD; this interaction decreases binding to actin.

Its subcellular location is the cytoplasm. It localises to the cytoskeleton. The protein localises to the myofibril. The protein resides in the sarcomere. Its function is as follows. F-actin-capping proteins bind in a Ca(2+)-independent manner to the fast growing ends of actin filaments (barbed end) thereby blocking the exchange of subunits at these ends. Unlike other capping proteins (such as gelsolin and severin), these proteins do not sever actin filaments. Plays a role in the regulation of cell morphology and cytoskeletal organization. Forms, with CAPZB, the barbed end of the fast growing ends of actin filaments in the dynactin complex and stabilizes dynactin structure. The dynactin multiprotein complex activates the molecular motor dynein for ultra-processive transport along microtubules. This Mesocricetus auratus (Golden hamster) protein is F-actin-capping protein subunit beta.